The primary structure comprises 508 residues: UDP-N-acetylmuramoyl-L-alanyl-D-glutamate--L-lysine ligase (508 aa).

Ser-47 serves as a coordination point for UDP-N-acetyl-alpha-D-muramoyl-L-alanyl-D-glutamate. 124-130 (GTKGKTT) lines the ATP pocket. UDP-N-acetyl-alpha-D-muramoyl-L-alanyl-D-glutamate-binding positions include 168–169 (TT), Ser-195, and Arg-203. Lys-237 is subject to N6-carboxylysine. The L-lysine recognition motif motif lies at 425 to 428 (DDPA).

Belongs to the MurCDEF family. MurE subfamily. Post-translationally, carboxylation is probably crucial for Mg(2+) binding and, consequently, for the gamma-phosphate positioning of ATP.

The protein resides in the cytoplasm. The catalysed reaction is UDP-N-acetyl-alpha-D-muramoyl-L-alanyl-D-glutamate + L-lysine + ATP = UDP-N-acetyl-alpha-D-muramoyl-L-alanyl-gamma-D-glutamyl-L-lysine + ADP + phosphate + H(+). It participates in cell wall biogenesis; peptidoglycan biosynthesis. In terms of biological role, catalyzes the addition of L-lysine to the nucleotide precursor UDP-N-acetylmuramoyl-L-alanyl-D-glutamate (UMAG) in the biosynthesis of bacterial cell-wall peptidoglycan. This Enterococcus faecalis (strain ATCC 700802 / V583) protein is UDP-N-acetylmuramoyl-L-alanyl-D-glutamate--L-lysine ligase.